A 325-amino-acid polypeptide reads, in one-letter code: Ribose-phosphate pyrophosphokinase (325 aa).

Residues 45-47 and 104-105 contribute to the ATP site; these read NGE and RQ. Residues His-138 and Asp-178 each contribute to the Mg(2+) site. Residue Lys-202 is part of the active site. Residues Arg-204, Asp-230, and 234 to 238 each bind D-ribose 5-phosphate; that span reads DTGGT.

Belongs to the ribose-phosphate pyrophosphokinase family. Class I subfamily. In terms of assembly, homohexamer. Mg(2+) serves as cofactor.

It is found in the cytoplasm. It carries out the reaction D-ribose 5-phosphate + ATP = 5-phospho-alpha-D-ribose 1-diphosphate + AMP + H(+). The protein operates within metabolic intermediate biosynthesis; 5-phospho-alpha-D-ribose 1-diphosphate biosynthesis; 5-phospho-alpha-D-ribose 1-diphosphate from D-ribose 5-phosphate (route I): step 1/1. Functionally, involved in the biosynthesis of the central metabolite phospho-alpha-D-ribosyl-1-pyrophosphate (PRPP) via the transfer of pyrophosphoryl group from ATP to 1-hydroxyl of ribose-5-phosphate (Rib-5-P). The protein is Ribose-phosphate pyrophosphokinase of Corynebacterium glutamicum (strain ATCC 13032 / DSM 20300 / JCM 1318 / BCRC 11384 / CCUG 27702 / LMG 3730 / NBRC 12168 / NCIMB 10025 / NRRL B-2784 / 534).